We begin with the raw amino-acid sequence, 393 residues long: Probable galacturonosyltransferase-like 8 (393 aa).

The Cytoplasmic segment spans residues 1-4 (MSSR). The chain crosses the membrane as a helical; Signal-anchor for type II membrane protein span at residues 5 to 25 (FSLTVVCLIALLPFVVGIRLI). The Lumenal portion of the chain corresponds to 26–393 (PARITSVGDG…SELTDDSSFL (368 aa)). Asn-226 carries an N-linked (GlcNAc...) asparagine glycan.

It belongs to the glycosyltransferase 8 family.

The protein localises to the golgi apparatus membrane. It functions in the pathway glycan metabolism; pectin biosynthesis. Its function is as follows. May be involved in pectin and/or xylans biosynthesis in cell walls. The chain is Probable galacturonosyltransferase-like 8 (GATL8) from Arabidopsis thaliana (Mouse-ear cress).